Consider the following 87-residue polypeptide: U3-theraphotoxin-Hhn1m (87 aa).

An N-terminal signal peptide occupies residues 1–24 (MVNMKASMFLTFAGLVLLFVVCYA). A propeptide spanning residues 25–52 (SESEEKEFPKEMLSSIFAVDNDFKQEER) is cleaved from the precursor. Disulfide bonds link C54–C67, C61–C72, and C66–C79.

Belongs to the neurotoxin 10 (Hwtx-1) family. 51 (Hntx-8) subfamily. Hntx-8 sub-subfamily. In terms of tissue distribution, expressed by the venom gland.

It localises to the secreted. Its function is as follows. Ion channel inhibitor. In Cyriopagopus hainanus (Chinese bird spider), this protein is U3-theraphotoxin-Hhn1m.